Reading from the N-terminus, the 472-residue chain is Trigger factor (472 aa).

Residues 174–261 (GDIALVSFKG…LEDLKIKELP (88 aa)) enclose the PPIase FKBP-type domain. Residues 438 to 472 (EKTPEKARDQIKEKSSKKKTTKTNKEKKSSKTPKS) form a disordered region. Residues 439-451 (KTPEKARDQIKEK) are compositionally biased toward basic and acidic residues.

Belongs to the FKBP-type PPIase family. Tig subfamily.

The protein resides in the cytoplasm. It carries out the reaction [protein]-peptidylproline (omega=180) = [protein]-peptidylproline (omega=0). Involved in protein export. Acts as a chaperone by maintaining the newly synthesized protein in an open conformation. Functions as a peptidyl-prolyl cis-trans isomerase. The sequence is that of Trigger factor from Prochlorococcus marinus (strain NATL2A).